Reading from the N-terminus, the 165-residue chain is NADPH-dependent 7-cyano-7-deazaguanine reductase (165 aa).

Cysteine 56 functions as the Thioimide intermediate in the catalytic mechanism. Aspartate 63 acts as the Proton donor in catalysis. Substrate-binding positions include 78-80 and 97-98; these read VES and HE.

This sequence belongs to the GTP cyclohydrolase I family. QueF type 1 subfamily.

The protein resides in the cytoplasm. The catalysed reaction is 7-aminomethyl-7-carbaguanine + 2 NADP(+) = 7-cyano-7-deazaguanine + 2 NADPH + 3 H(+). It functions in the pathway tRNA modification; tRNA-queuosine biosynthesis. Catalyzes the NADPH-dependent reduction of 7-cyano-7-deazaguanine (preQ0) to 7-aminomethyl-7-deazaguanine (preQ1). The protein is NADPH-dependent 7-cyano-7-deazaguanine reductase of Bacillus cereus (strain ATCC 14579 / DSM 31 / CCUG 7414 / JCM 2152 / NBRC 15305 / NCIMB 9373 / NCTC 2599 / NRRL B-3711).